The chain runs to 471 residues: Trigger factor (471 aa).

One can recognise a PPIase FKBP-type domain in the interval 174–261 (GDVAVVSFEG…VKDLKTRELP (88 aa)). Over residues 436-446 (ETLPKTKSLNG) the composition is skewed to polar residues. Residues 436 to 471 (ETLPKTKSLNGKPSTQGKTSQSKSKKTKTKVEKTTK) are disordered. The span at 447–457 (KPSTQGKTSQS) shows a compositional bias: low complexity.

Belongs to the FKBP-type PPIase family. Tig subfamily.

The protein localises to the cytoplasm. It catalyses the reaction [protein]-peptidylproline (omega=180) = [protein]-peptidylproline (omega=0). Functionally, involved in protein export. Acts as a chaperone by maintaining the newly synthesized protein in an open conformation. Functions as a peptidyl-prolyl cis-trans isomerase. In Prochlorococcus marinus (strain MIT 9211), this protein is Trigger factor.